We begin with the raw amino-acid sequence, 432 residues long: Malate dehydrogenase [NADP], chloroplastic (432 aa).

A chloroplast-targeting transit peptide spans 1 to 40 (MGLSTVYSPAGPRLVPAPLGRCRSAQPRRPRRAPLATVRC). Residues 18 to 37 (PLGRCRSAQPRRPRRAPLAT) are disordered. Cysteine 67 and cysteine 72 form a disulfide bridge. 96–102 (GAAGMIS) serves as a coordination point for NADP(+). Arginine 177 and arginine 183 together coordinate substrate. Asparagine 190 is a binding site for NADP(+). Glutamine 197 is a binding site for NAD(+). Residue 214–216 (VGN) coordinates NADP(+). Positions 216 and 247 each coordinate substrate. Histidine 272 (proton acceptor) is an active-site residue. Cysteine 408 and cysteine 420 are joined by a disulfide.

This sequence belongs to the LDH/MDH superfamily. MDH type 2 family. As to quaternary structure, homodimer.

The protein resides in the plastid. The protein localises to the chloroplast. It carries out the reaction (S)-malate + NADP(+) = oxaloacetate + NADPH + H(+). With respect to regulation, chloroplast NADP-MDH is activated upon illumination. In order to be enzymatically active, disulfide bridges on the protein must be reduced by thioredoxin which receives electrons from ferredoxin and the electron transport system of photosynthesis. Its function is as follows. The chloroplastic, NADP-dependent form is essential for the photosynthesis C4 cycle, which allows plants to circumvent the problem of photorespiration. In C4 plants, NADP-MDH activity acts to convert oxaloacetate to malate in chloroplasts of mesophyll cells for transport to the bundle sheath cells. This is Malate dehydrogenase [NADP], chloroplastic from Zea mays (Maize).